The chain runs to 327 residues: Ferredoxin--NADP reductase (327 aa).

T18, D37, Q45, Y50, A90, F124, D283, and S324 together coordinate FAD.

Belongs to the ferredoxin--NADP reductase type 2 family. As to quaternary structure, homodimer. Requires FAD as cofactor.

It catalyses the reaction 2 reduced [2Fe-2S]-[ferredoxin] + NADP(+) + H(+) = 2 oxidized [2Fe-2S]-[ferredoxin] + NADPH. The sequence is that of Ferredoxin--NADP reductase from Saccharopolyspora erythraea (strain ATCC 11635 / DSM 40517 / JCM 4748 / NBRC 13426 / NCIMB 8594 / NRRL 2338).